Consider the following 217-residue polypeptide: Uracil-DNA glycosylase (217 aa).

The Proton acceptor role is filled by Asp-62.

Belongs to the uracil-DNA glycosylase (UDG) superfamily. UNG family.

It is found in the cytoplasm. The catalysed reaction is Hydrolyzes single-stranded DNA or mismatched double-stranded DNA and polynucleotides, releasing free uracil.. In terms of biological role, excises uracil residues from the DNA which can arise as a result of misincorporation of dUMP residues by DNA polymerase or due to deamination of cytosine. This Streptococcus pneumoniae serotype 19F (strain G54) protein is Uracil-DNA glycosylase.